The chain runs to 1541 residues: Regulator of G-protein signaling loco (1541 aa).

Residues 1 to 66 (MHHHHPPLPI…RRKKRANYNY (66 aa)) form a disordered region. Low complexity predominate over residues 11–36 (TGASGSTAVGTGAAAAEDASPAANSG). Over residues 40–53 (ISTSTTPSGSNSQQ) the composition is skewed to polar residues. One can recognise a PDZ domain in the interval 71–148 (TVEVRRGYNG…SIRMQIAENY (78 aa)). Positions 182 to 222 (AKLHRLRNSPQKKLNPPEAVEPHKSKSSPDHPTLKPVLEDP) are disordered. The span at 201 to 214 (VEPHKSKSSPDHPT) shows a compositional bias: basic and acidic residues. The region spanning 247-423 (AALECRVIVG…VVNLVRSMYT (177 aa)) is the PID domain. 2 disordered regions span residues 449-473 (GAVA…SNSD) and 708-761 (SEPD…ASMN). Composition is skewed to polar residues over residues 457-473 (PQPS…SNSD) and 744-761 (EQQQ…ASMN). The RGS domain maps to 827–943 (SFERMLQDAA…IRSDLYKSCV (117 aa)). A disordered region spans residues 978–1004 (SASNAEDRRRKSLLPWHRKTRSKSRDR). Positions 987 to 999 (RKSLLPWHRKTRS) are enriched in basic residues. RBD domains are found at residues 1072 to 1142 (SLCR…IERR) and 1143 to 1213 (VAFK…IVMV). Residues 1258-1327 (DAAASEKSRP…SEEAATTQAV (70 aa)) are disordered. The segment covering 1273-1285 (MKSNEAPSETSSL) has biased composition (polar residues). Over residues 1312–1325 (TSSSQQSEEAATTQ) the composition is skewed to low complexity. In terms of domain architecture, GoLoco spans 1354-1376 (QDELLEGLKRAQLARLEDQRGTE). The disordered stretch occupies residues 1410 to 1513 (KVPATPTEIP…ASKPGTFASK (104 aa)). Over residues 1460–1469 (APPPLPPKPK) the composition is skewed to pro residues. Residues 1483 to 1499 (PTGNYCNKYSPSKQVPT) are compositionally biased toward polar residues.

In terms of assembly, interacts (via GoLoco and RGS domains) with Galphai (via GDP- or GTP-bound forms). Expressed in surface and longitudinal glial cells, gut and heart (at protein level).

The protein localises to the cytoplasm. It is found in the cell membrane. Its subcellular location is the apical cell membrane. Its function is as follows. Acts as a regulator of G protein signaling (RGS). Modulates G protein alpha subunits nucleotide exchange and hydrolysis activities by functioning either as a GTPase-activating protein (GAP), thereby driving G protein alpha subunits into their inactive GDP-bound form, or as a GDP-dissociation inhibitor (GDI). Confers GDI and GAP activities on G(i) alpha subunit Galphai. Confers GAP activity on G(o)-alpha subunit Galphao and G(i) alpha subunit Galphai. Involved in the dorsal-ventral axis formation of the egg. Acts as a G-protein signaling for glial cell differentiation during embryogenesis; Galphai, Galphao and the G-protein coupled receptor, moody, are required in the surface glia to achieve effective insulation of the nerve cord. May be essential for nurse cell dumping during oogenesis. Required in neuroblast asymmetrical cell division. Plays a role in stress resistance and life span control. In Drosophila melanogaster (Fruit fly), this protein is Regulator of G-protein signaling loco (loco).